The primary structure comprises 743 residues: MIPGSNPGGRIHNVVKMFQSYFMDAVNGYYRHLAIIESQDYLEKVNSLVEEYLEVNKKPRVIYGFHPWLDNSKDRMIEFRKKFENFLDIDYSNSEKYLGQSVDLVILDAIGDFRPNYIARFVDMTKGGGMAIIYSDDILRGKLYKESLTRDGVVKDLFERRFMELAKRYRGIIFLQGDRLTFTPYSSNETHKSHKKIPKSPKVPMQLHELCLSSDQNKVLEESLFITSPGKRVLVVTAARGRGKSASIGLFLSYLMTEEKFGNILVTSPTYYSSQEIFNFVIKGLDALNVKYKLTTSKDGKIMKITTGESRVKWVSPDLARNEEGDLIVVDEAAAIGMEFLDYILQGWDKTILVTTVHGYEGSGKAFLKYVNRLKSKVLLKHIKMDYPIRYAKGDPIEKFMFDVFLLDAEPAEVMYNGELKIEDVSQEELFQDNNLLKSVYGILVTAHYRNSPDDLMLLGDMAFQKIVVGYSSEKPIAVCQVVSEGDLTDRQIEDISNGLKNEGHLIPHRLIKYMRAFDFGKLKGWRIMRIAVSPENQGKGIGSRIIEEVIKMAKGVDWVGSSFVADYSVLRFWIKNGFTPVYLSSIKNEELNGYSVIVIRALSEKSKGFVVKLSSLLKDKLLRTSHQVYYNLNPQLIALLMRNTYSERRREGEVPDLYVNKIKAYIEGKVPYNVIAETAHFLITKHFLELKVNLSIEAEASLVARVLQGKSWYHAGLMLGLSSREVEERVKQGLEVLLRTYS.

ATP-binding positions include Gln216, 241-250 (GRGKSASIGL), and Arg390. The region spanning 420-604 (LKIEDVSQEE…YSVIVIRALS (185 aa)) is the N-acetyltransferase domain. Residues 531-533 (IAV) and 538-544 (QGKGIGS) each bind acetyl-CoA.

It belongs to the RNA cytidine acetyltransferase family. TmcA subfamily.

It is found in the cytoplasm. The enzyme catalyses cytidine(34) in elongator tRNA(Met) + acetyl-CoA + ATP + H2O = N(4)-acetylcytidine(34) in elongator tRNA(Met) + ADP + phosphate + CoA + H(+). In terms of biological role, catalyzes the formation of N(4)-acetylcytidine (ac(4)C) at the wobble position of tRNA(Met), by using acetyl-CoA as an acetyl donor and ATP (or GTP). This is tRNA(Met) cytidine acetyltransferase TmcA from Saccharolobus islandicus (strain Y.G.57.14 / Yellowstone #1) (Sulfolobus islandicus).